The primary structure comprises 236 residues: Pyridoxine 5'-phosphate synthase (236 aa).

Position 6 (Asn6) interacts with 3-amino-2-oxopropyl phosphate. 8–9 contacts 1-deoxy-D-xylulose 5-phosphate; sequence DH. Arg17 contacts 3-amino-2-oxopropyl phosphate. His42 functions as the Proton acceptor in the catalytic mechanism. Positions 44 and 49 each coordinate 1-deoxy-D-xylulose 5-phosphate. The active-site Proton acceptor is the Glu69. A 1-deoxy-D-xylulose 5-phosphate-binding site is contributed by Thr99. The active-site Proton donor is His190. 3-amino-2-oxopropyl phosphate is bound by residues Gly191 and 212–213; that span reads GH.

The protein belongs to the PNP synthase family. As to quaternary structure, homooctamer; tetramer of dimers.

Its subcellular location is the cytoplasm. It catalyses the reaction 3-amino-2-oxopropyl phosphate + 1-deoxy-D-xylulose 5-phosphate = pyridoxine 5'-phosphate + phosphate + 2 H2O + H(+). The protein operates within cofactor biosynthesis; pyridoxine 5'-phosphate biosynthesis; pyridoxine 5'-phosphate from D-erythrose 4-phosphate: step 5/5. Catalyzes the complicated ring closure reaction between the two acyclic compounds 1-deoxy-D-xylulose-5-phosphate (DXP) and 3-amino-2-oxopropyl phosphate (1-amino-acetone-3-phosphate or AAP) to form pyridoxine 5'-phosphate (PNP) and inorganic phosphate. This is Pyridoxine 5'-phosphate synthase from Prosthecochloris aestuarii (strain DSM 271 / SK 413).